The sequence spans 243 residues: Uridylate kinase (243 aa).

Lysine 15–glycine 18 lines the ATP pocket. Glycine 57 contacts UMP. Residues glycine 58 and arginine 62 each contribute to the ATP site. UMP contacts are provided by residues aspartate 77 and threonine 138–threonine 145. ATP contacts are provided by threonine 165, phenylalanine 171, and aspartate 174.

Belongs to the UMP kinase family. Homohexamer.

It localises to the cytoplasm. The enzyme catalyses UMP + ATP = UDP + ADP. Its pathway is pyrimidine metabolism; CTP biosynthesis via de novo pathway; UDP from UMP (UMPK route): step 1/1. Inhibited by UTP. Its function is as follows. Catalyzes the reversible phosphorylation of UMP to UDP. The sequence is that of Uridylate kinase from Blochmanniella floridana.